The sequence spans 150 residues: Large ribosomal subunit protein bL9 (150 aa).

Belongs to the bacterial ribosomal protein bL9 family.

Its function is as follows. Binds to the 23S rRNA. The chain is Large ribosomal subunit protein bL9 from Neisseria meningitidis serogroup C (strain 053442).